The sequence spans 88 residues: AFAGVLADADIKAALAGCAAADSFNYKTFFKSPEEVKKFFAIIDQDHSGFIEEEELKLFLQTFSAGARALSDAETKIGVDEFATMVKX.

Ala-1 bears the N-acetylalanine mark. Residues 31-66 (KSPEEVKKFFAIIDQDHSGFIEEEELKLFLQTFSAG) form the EF-hand domain. Ca(2+)-binding residues include Asp-44, Asp-46, Ser-48, Phe-50, Glu-52, Glu-55, and Glu-81.

The protein belongs to the parvalbumin family.

Functionally, in muscle, parvalbumin is thought to be involved in relaxation after contraction. It binds two calcium ions. The polypeptide is Parvalbumin beta 3 (Merluccius productus (North Pacific hake)).